The primary structure comprises 291 residues: Signal peptidase I (291 aa).

Over 1–45 (MTMKKLTSTTTTLWDNKLFINNLKNFMQTNTESNNNKTTAQEWKS) the chain is Cytoplasmic. A helical membrane pass occupies residues 46–66 (FILVVVIALMIRILIIESFVV). Residues 67–291 (PTGSMKATIL…IFRNLYSIED (225 aa)) lie on the Periplasmic side of the membrane. Catalysis depends on residues serine 70 and lysine 133.

It belongs to the peptidase S26 family.

The protein localises to the cell inner membrane. It carries out the reaction Cleavage of hydrophobic, N-terminal signal or leader sequences from secreted and periplasmic proteins.. The sequence is that of Signal peptidase I (lepB) from Rickettsia bellii (strain RML369-C).